The sequence spans 373 residues: MDSFAAVATQLGPHFAALSNGSVVDKVTPDMAHLISPYWNQFPAMDPIWAKILTAYMIIIGMISWCGNGVVIYIFATTKSLRTPANLLVINLAISDFGIMITNTPMMGINLYFETWVLGPMMCDIYAGLGSAFGCSSIWSMCMISLDRYQVIVKGMAGRPMTIPLALGKIAYIWFMSSIWCLAPVFGWSRYVPEGNLTSCGIDYLERDWNPRSYLIFYSIFVYYIPLFLICYSYWFIIAAVSAHEKAMREQAKKMNVKSLRSSEDADKSAEGKLAKVALVTISLWFMAWTPYLVINCMGLFKFEGLTPLNTIWGACFAKSAACYNPIVYGISHPKYRLALKEKCPCCVFGKVDDGKSSEAQSQATNSEAESKA.

Residues M1–T54 are Extracellular-facing. N-linked (GlcNAc...) asparagine glycosylation is present at N20. A helical transmembrane segment spans residues A55 to F75. At A76 to N86 the chain is on the cytoplasmic side. A helical membrane pass occupies residues L87–M107. At G108–D124 the chain is on the extracellular side. A disulfide bridge connects residues C123 and C200. A helical transmembrane segment spans residues I125–S145. At L146–T162 the chain is on the cytoplasmic side. Residues I163–A183 form a helical membrane-spanning segment. Topologically, residues P184–S219 are extracellular. N196 is a glycosylation site (N-linked (GlcNAc...) asparagine). The helical transmembrane segment at I220–A240 threads the bilayer. Topologically, residues V241–K276 are cytoplasmic. A helical membrane pass occupies residues V277–C297. Over M298 to P308 the chain is Extracellular. A helical membrane pass occupies residues L309 to I331. K319 is modified (N6-(retinylidene)lysine). The Cytoplasmic segment spans residues S332–A373. The tract at residues D354–A373 is disordered. The segment covering S358–A373 has biased composition (polar residues).

Belongs to the G-protein coupled receptor 1 family. Opsin subfamily. Post-translationally, phosphorylated on some or all of the serine and threonine residues present in the C-terminal region.

The protein resides in the cell projection. Its subcellular location is the rhabdomere membrane. Functionally, visual pigments are the light-absorbing molecules that mediate vision. They consist of an apoprotein, opsin, covalently linked to cis-retinal. The sequence is that of Opsin Rh1 (ninaE) from Drosophila pseudoobscura pseudoobscura (Fruit fly).